The primary structure comprises 91 residues: Putative septation protein SpoVG (91 aa).

This sequence belongs to the SpoVG family.

Could be involved in septation. This is Putative septation protein SpoVG from Caldanaerobacter subterraneus subsp. tengcongensis (strain DSM 15242 / JCM 11007 / NBRC 100824 / MB4) (Thermoanaerobacter tengcongensis).